Here is a 640-residue protein sequence, read N- to C-terminus: Scarecrow-like protein 27 (640 aa).

Low complexity-rich tracts occupy residues 68–79 (SYSSTTTTLSSS) and 86–98 (TVTNTTVTAGDDN). Residues 68-98 (SYSSTTTTLSSSHGGGGTTVTNTTVTAGDDN) form a disordered region. A GRAS domain is found at 259-639 (GMAGDDQSVI…KELVTVSAWK (381 aa)). Residues 266 to 331 (SVIIEQLFNA…AEALLSLIHN (66 aa)) form a leucine repeat I (LRI) region. The VHIID stretch occupies residues 350 to 422 (YRSFSETSPF…NRASSLKLTV (73 aa)). The short motif at 383 to 387 (IHIID) is the VHIID element. A leucine repeat II (LRII) region spans residues 438-470 (FTEENLKTFAGEVKIPFEIELLSVELLLNPAYW). The segment at 480-565 (EAIAVNLPVN…RFWVQPSIEK (86 aa)) is PFYRE. Residues 568–639 (MKRHRWIERS…KELVTVSAWK (72 aa)) form an SAW region.

This sequence belongs to the GRAS family. In terms of tissue distribution, expressed in seedlings, roots, cotyledons, leaves and flowers.

The protein localises to the nucleus. Its function is as follows. Probable transcription factor involved in plant development. The polypeptide is Scarecrow-like protein 27 (SCL27) (Arabidopsis thaliana (Mouse-ear cress)).